The chain runs to 502 residues: Glycerol kinase (502 aa).

Thr-14 contacts ADP. 3 residues coordinate ATP: Thr-14, Thr-15, and Ser-16. Sn-glycerol 3-phosphate is bound at residue Thr-14. An ADP-binding site is contributed by Arg-18. The sn-glycerol 3-phosphate site is built by Arg-84, Glu-85, Tyr-136, and Asp-246. Glycerol is bound by residues Arg-84, Glu-85, Tyr-136, Asp-246, and Gln-247. Residues Thr-268 and Gly-311 each contribute to the ADP site. Thr-268, Gly-311, Gln-315, and Gly-412 together coordinate ATP. 2 residues coordinate ADP: Gly-412 and Asn-416.

The protein belongs to the FGGY kinase family. As to quaternary structure, homotetramer and homodimer (in equilibrium). Heterodimer with EIIA-Glc. Binds 1 zinc ion per glycerol kinase EIIA-Glc dimer. The zinc ion is important for dimerization.

The enzyme catalyses glycerol + ATP = sn-glycerol 3-phosphate + ADP + H(+). Its pathway is polyol metabolism; glycerol degradation via glycerol kinase pathway; sn-glycerol 3-phosphate from glycerol: step 1/1. Activity of this regulatory enzyme is affected by several metabolites. Allosterically and non-competitively inhibited by fructose 1,6-bisphosphate (FBP) and unphosphorylated phosphocarrier protein EIIA-Glc (III-Glc), an integral component of the bacterial phosphotransferase (PTS) system. Key enzyme in the regulation of glycerol uptake and metabolism. Catalyzes the phosphorylation of glycerol to yield sn-glycerol 3-phosphate. This is Glycerol kinase from Enterobacter sp. (strain 638).